Reading from the N-terminus, the 356-residue chain is MAADEPKNLSFVLEGIKKVKFEDRPVPVLKDAHDVLVNVRYTGICGSDVHYWDHGSIGPFVLTEPMVLGHESSGVVTEIGPAVKSLKVGDRVALEPGICCRRCEPCKSGKYNLCVDMVFAATPPYDGTLAKYYVLPEDFCYKLPSAMDLKDGALMEPLGVAVHITRQAEVKPGDTVVVFGAGPVGLLCCAASRAFGAIKIISVDIQPERLDFAKKYAATGVFLPEKASAVENAERLRSGHGLGRGADVVIDASGAEQSVHTGIYVARPGGTYVQGGMGRDEISFPIMAACTKELNMKGSFRYNSGDYKLALELVGSGRLSVKELVTKVVAFTDAEQAFEEVKAGKGIKTLIAGVDG.

C45, H70, and E71 together coordinate Zn(2+). Position 180 to 185 (180 to 185 (GAGPVG)) interacts with NAD(+).

The protein belongs to the zinc-containing alcohol dehydrogenase family. It depends on Zn(2+) as a cofactor.

It carries out the reaction xylitol + NAD(+) = D-xylulose + NADH + H(+). It functions in the pathway carbohydrate degradation; L-arabinose degradation via L-arabinitol; D-xylulose 5-phosphate from L-arabinose (fungal route): step 4/5. Its function is as follows. Xylitol dehydrogenase which catalyzes the conversion of xylitol to D-xylulose. Xylose is a major component of hemicelluloses such as xylan. Most fungi utilize D-xylose via three enzymatic reactions, xylose reductase (XR), xylitol dehydrogenase (XDH), and xylulokinase, to form xylulose 5-phosphate, which enters pentose phosphate pathway. The polypeptide is Probable D-xylulose reductase A (xdhA) (Arthroderma otae (strain ATCC MYA-4605 / CBS 113480) (Microsporum canis)).